The primary structure comprises 101 residues: Movement protein (101 aa).

The helical transmembrane segment at 30-50 (EVAILSFVALICFYLLYLWVL) threads the bilayer. Residues 75-101 (VDRSNPIPNLPAPPSQGNPGPFVPGTG) form a disordered region.

This sequence belongs to the mastrevirus movement protein family. As to quaternary structure, interacts with the capsid protein (CP). Part of a MP-CP-viral DNA complex.

It is found in the host membrane. Involved in the viral transport within, and between cells. This Maize streak virus genotype A (isolate South Africa) (MSV) protein is Movement protein.